A 60-amino-acid chain; its full sequence is Metallothionein (60 aa).

Residues 1 to 28 are beta; sequence MDCACATGGSCSCAGSCKCENCKCTSCK. A divalent metal cation-binding residues include C3, C5, C11, C13, C17, C19, C22, C24, C27, C31, C32, C34, C35, C39, C42, C46, C48, C56, C58, and C59. The interval 29 to 60 is alpha; it reads KSCCSCCPSECEKCGQGCVCKGGSSEKCSCCN.

Belongs to the metallothionein superfamily. Type 1 family.

In terms of biological role, metallothioneins have a high content of cysteine residues that bind various heavy metals. The chain is Metallothionein (MT-A) from Ambystoma mexicanum (Axolotl).